Reading from the N-terminus, the 531-residue chain is Probable cytochrome P450 4e1 (531 aa).

Residues Glu-307 and Cys-444 each contribute to the heme site.

This sequence belongs to the cytochrome P450 family. It depends on heme as a cofactor.

It is found in the endoplasmic reticulum membrane. The protein localises to the microsome membrane. Its function is as follows. May be involved in the metabolism of insect hormones and in the breakdown of synthetic insecticides. The polypeptide is Probable cytochrome P450 4e1 (Cyp4e1) (Drosophila melanogaster (Fruit fly)).